A 371-amino-acid chain; its full sequence is Dual-specificity RNA methyltransferase RlmN (371 aa).

Glu97 acts as the Proton acceptor in catalysis. The 239-residue stretch at 103–341 (DGDRATLCVS…VTVRTTRGDD (239 aa)) folds into the Radical SAM core domain. Cysteines 110 and 346 form a disulfide. The [4Fe-4S] cluster site is built by Cys117, Cys121, and Cys124. S-adenosyl-L-methionine-binding positions include 171-172 (GE), Ser203, 225-227 (SLH), and Asn303. Cys346 (S-methylcysteine intermediate) is an active-site residue.

This sequence belongs to the radical SAM superfamily. RlmN family. Requires [4Fe-4S] cluster as cofactor.

The protein localises to the cytoplasm. The enzyme catalyses adenosine(2503) in 23S rRNA + 2 reduced [2Fe-2S]-[ferredoxin] + 2 S-adenosyl-L-methionine = 2-methyladenosine(2503) in 23S rRNA + 5'-deoxyadenosine + L-methionine + 2 oxidized [2Fe-2S]-[ferredoxin] + S-adenosyl-L-homocysteine. It catalyses the reaction adenosine(37) in tRNA + 2 reduced [2Fe-2S]-[ferredoxin] + 2 S-adenosyl-L-methionine = 2-methyladenosine(37) in tRNA + 5'-deoxyadenosine + L-methionine + 2 oxidized [2Fe-2S]-[ferredoxin] + S-adenosyl-L-homocysteine. Functionally, specifically methylates position 2 of adenine 2503 in 23S rRNA and position 2 of adenine 37 in tRNAs. m2A2503 modification seems to play a crucial role in the proofreading step occurring at the peptidyl transferase center and thus would serve to optimize ribosomal fidelity. The protein is Dual-specificity RNA methyltransferase RlmN of Marinomonas sp. (strain MWYL1).